The primary structure comprises 283 residues: Nucleotide-binding protein IL0393 (283 aa).

Residue 8 to 15 coordinates ATP; the sequence is GRSGSGKT. A GTP-binding site is contributed by 56–59; sequence DVRN.

It belongs to the RapZ-like family.

Displays ATPase and GTPase activities. The sequence is that of Nucleotide-binding protein IL0393 from Idiomarina loihiensis (strain ATCC BAA-735 / DSM 15497 / L2-TR).